We begin with the raw amino-acid sequence, 264 residues long: 3-methyl-2-oxobutanoate hydroxymethyltransferase (264 aa).

Residues D45 and D84 each coordinate Mg(2+). 3-methyl-2-oxobutanoate is bound by residues 45 to 46, D84, and K112; that span reads DS. E114 provides a ligand contact to Mg(2+). The active-site Proton acceptor is the E181.

Belongs to the PanB family. Homodecamer; pentamer of dimers. The cofactor is Mg(2+).

The protein resides in the cytoplasm. The enzyme catalyses 3-methyl-2-oxobutanoate + (6R)-5,10-methylene-5,6,7,8-tetrahydrofolate + H2O = 2-dehydropantoate + (6S)-5,6,7,8-tetrahydrofolate. It participates in cofactor biosynthesis; (R)-pantothenate biosynthesis; (R)-pantoate from 3-methyl-2-oxobutanoate: step 1/2. Its function is as follows. Catalyzes the reversible reaction in which hydroxymethyl group from 5,10-methylenetetrahydrofolate is transferred onto alpha-ketoisovalerate to form ketopantoate. This is 3-methyl-2-oxobutanoate hydroxymethyltransferase from Shewanella loihica (strain ATCC BAA-1088 / PV-4).